The primary structure comprises 1178 residues: Pyruvate carboxylase 1 (1178 aa).

The Biotin carboxylation domain occupies 18–470 (EKNKILVANR…WTTFIDDTPQ (453 aa)). K136, E220, and H255 together coordinate ATP. An ATP-grasp domain is found at 140–337 (RNLAAKANVP…IVAAQIQIAA (198 aa)). Residue R312 is part of the active site. In terms of domain architecture, Pyruvate carboxyltransferase spans 557-824 (TLLMDTTWRD…DTGINVEHVR (268 aa)). Residues 565–569 (RDAHQ) and R638 each bind substrate. D566 provides a ligand contact to a divalent metal cation. A divalent metal cation contacts are provided by K734, H764, and H766. K734 is subject to N6-carboxylysine. T898 is a binding site for substrate. Residues 1094 to 1169 (KADMHDPLHI…DSSDLLVLLE (76 aa)) enclose the Biotinyl-binding domain. N6-biotinyllysine is present on K1135.

As to quaternary structure, homotetramer. It depends on biotin as a cofactor. Requires Zn(2+) as cofactor.

The protein localises to the cytoplasm. It carries out the reaction hydrogencarbonate + pyruvate + ATP = oxaloacetate + ADP + phosphate + H(+). It functions in the pathway carbohydrate biosynthesis; gluconeogenesis. Functionally, pyruvate carboxylase catalyzes a 2-step reaction, involving the ATP-dependent carboxylation of the covalently attached biotin in the first step and the transfer of the carboxyl group to pyruvate in the second. In Saccharomyces cerevisiae (strain ATCC 204508 / S288c) (Baker's yeast), this protein is Pyruvate carboxylase 1 (PYC1).